The primary structure comprises 447 residues: Tubulin beta chain (447 aa).

Gln11, Glu69, Ser138, Gly142, Thr143, Gly144, Asn204, and Asn226 together coordinate GTP. Glu69 provides a ligand contact to Mg(2+). Positions 424–447 are disordered; the sequence is QYQEASVSEGEEEYDEEAPLEGEE. The segment covering 432–447 has biased composition (acidic residues); sequence EGEEEYDEEAPLEGEE.

Belongs to the tubulin family. In terms of assembly, dimer of alpha and beta chains. A typical microtubule is a hollow water-filled tube with an outer diameter of 25 nm and an inner diameter of 15 nM. Alpha-beta heterodimers associate head-to-tail to form protofilaments running lengthwise along the microtubule wall with the beta-tubulin subunit facing the microtubule plus end conferring a structural polarity. Microtubules usually have 13 protofilaments but different protofilament numbers can be found in some organisms and specialized cells. It depends on Mg(2+) as a cofactor.

The protein resides in the cytoplasm. Its subcellular location is the cytoskeleton. Its function is as follows. Tubulin is the major constituent of microtubules, a cylinder consisting of laterally associated linear protofilaments composed of alpha- and beta-tubulin heterodimers. Microtubules grow by the addition of GTP-tubulin dimers to the microtubule end, where a stabilizing cap forms. Below the cap, tubulin dimers are in GDP-bound state, owing to GTPase activity of alpha-tubulin. This Venturia inaequalis (Apple scab fungus) protein is Tubulin beta chain.